We begin with the raw amino-acid sequence, 234 residues long: Glutathione S-transferase U11 (234 aa).

The 80-residue stretch at 11-90 (EYVKLLGAWP…YVDETWLSGP (80 aa)) folds into the GST N-terminal domain. Glutathione is bound by residues 21–22 (SP), 47–48 (LS), 61–62 (QI), and 74–75 (ES). Residues 96 to 228 (DPFDRAVARF…KLVQFARLKF (133 aa)) enclose the GST C-terminal domain.

This sequence belongs to the GST superfamily. Tau family.

The protein localises to the cytoplasm. The protein resides in the cytosol. It carries out the reaction RX + glutathione = an S-substituted glutathione + a halide anion + H(+). May be involved in the conjugation of reduced glutathione to a wide number of exogenous and endogenous hydrophobic electrophiles and have a detoxification role against certain herbicides. This is Glutathione S-transferase U11 (GSTU11) from Arabidopsis thaliana (Mouse-ear cress).